A 499-amino-acid chain; its full sequence is Inosine-5'-monophosphate dehydrogenase (499 aa).

CBS domains are found at residues 106–165 (IDRE…SDAV) and 169–225 (MTDE…GSAA). NAD(+)-binding positions include D260 and 308–310 (GIG). 2 residues coordinate K(+): G310 and G312. S313 contributes to the IMP binding site. Residue C315 participates in K(+) binding. C315 acts as the Thioimidate intermediate in catalysis. IMP-binding positions include 348-350 (DGG), 371-372 (GS), and 395-399 (YRGMG). R411 serves as the catalytic Proton acceptor. E425 contributes to the IMP binding site. Residues E479, G480, and H481 each contribute to the K(+) site. Residues 480-499 (GHPHDVMITDEAPNYSPQGE) are disordered.

Belongs to the IMPDH/GMPR family. As to quaternary structure, homotetramer. It depends on K(+) as a cofactor.

The enzyme catalyses IMP + NAD(+) + H2O = XMP + NADH + H(+). It participates in purine metabolism; XMP biosynthesis via de novo pathway; XMP from IMP: step 1/1. Its activity is regulated as follows. Mycophenolic acid (MPA) is a non-competitive inhibitor that prevents formation of the closed enzyme conformation by binding to the same site as the amobile flap. In contrast, mizoribine monophosphate (MZP) is a competitive inhibitor that induces the closed conformation. MPA is a potent inhibitor of mammalian IMPDHs but a poor inhibitor of the bacterial enzymes. MZP is a more potent inhibitor of bacterial IMPDH. Its function is as follows. Catalyzes the conversion of inosine 5'-phosphate (IMP) to xanthosine 5'-phosphate (XMP), the first committed and rate-limiting step in the de novo synthesis of guanine nucleotides, and therefore plays an important role in the regulation of cell growth. The polypeptide is Inosine-5'-monophosphate dehydrogenase (Halobacterium salinarum (strain ATCC 700922 / JCM 11081 / NRC-1) (Halobacterium halobium)).